A 1227-amino-acid polypeptide reads, in one-letter code: Methionine synthase (1227 aa).

Residues serine 2 to valine 325 enclose the Hcy-binding domain. Zn(2+)-binding residues include cysteine 247, cysteine 310, and cysteine 311. The Pterin-binding domain maps to phenylalanine 356–glutamate 617. The B12-binding N-terminal domain maps to glutamine 650–lysine 744. Methylcob(III)alamin is bound by residues glutamate 694, glycine 756 to aspartate 760, histidine 759, serine 804, threonine 808, and alanine 860. In terms of domain architecture, B12-binding spans asparagine 746–alanine 881. The region spanning lysine 897–aspartate 1227 is the AdoMet activation domain. S-adenosyl-L-methionine is bound by residues aspartate 946, arginine 1134, and tyrosine 1189 to tyrosine 1190.

Belongs to the vitamin-B12 dependent methionine synthase family. The cofactor is methylcob(III)alamin. Requires Zn(2+) as cofactor.

It catalyses the reaction (6S)-5-methyl-5,6,7,8-tetrahydrofolate + L-homocysteine = (6S)-5,6,7,8-tetrahydrofolate + L-methionine. It functions in the pathway amino-acid biosynthesis; L-methionine biosynthesis via de novo pathway; L-methionine from L-homocysteine (MetH route): step 1/1. Its function is as follows. Catalyzes the transfer of a methyl group from methyl-cobalamin to homocysteine, yielding enzyme-bound cob(I)alamin and methionine. Subsequently, remethylates the cofactor using methyltetrahydrofolate. The sequence is that of Methionine synthase (metH) from Escherichia coli (strain K12).